Here is a 261-residue protein sequence, read N- to C-terminus: Ribonuclease HII (261 aa).

The 190-residue stretch at 71-260 folds into the RNase H type-2 domain; it reads HYIAGVDEVG…LHKYRHNTLL (190 aa). Residues Asp77, Glu78, and Asp169 each contribute to the a divalent metal cation site.

Belongs to the RNase HII family. Mn(2+) is required as a cofactor. It depends on Mg(2+) as a cofactor.

Its subcellular location is the cytoplasm. The catalysed reaction is Endonucleolytic cleavage to 5'-phosphomonoester.. Its function is as follows. Endonuclease that specifically degrades the RNA of RNA-DNA hybrids. The protein is Ribonuclease HII of Oceanobacillus iheyensis (strain DSM 14371 / CIP 107618 / JCM 11309 / KCTC 3954 / HTE831).